Reading from the N-terminus, the 119-residue chain is Integration host factor subunit beta (119 aa).

The segment at A93–M119 is disordered. Over residues A97–T112 the composition is skewed to low complexity.

Belongs to the bacterial histone-like protein family. In terms of assembly, heterodimer of an alpha and a beta chain.

In terms of biological role, this protein is one of the two subunits of integration host factor, a specific DNA-binding protein that functions in genetic recombination as well as in transcriptional and translational control. The polypeptide is Integration host factor subunit beta (Bordetella petrii (strain ATCC BAA-461 / DSM 12804 / CCUG 43448)).